Consider the following 217-residue polypeptide: Elongation factor Ts (217 aa).

An involved in Mg(2+) ion dislocation from EF-Tu region spans residues 82–85; that stretch reads TDFV.

Belongs to the EF-Ts family.

It is found in the cytoplasm. Its function is as follows. Associates with the EF-Tu.GDP complex and induces the exchange of GDP to GTP. It remains bound to the aminoacyl-tRNA.EF-Tu.GTP complex up to the GTP hydrolysis stage on the ribosome. In Synechococcus sp. (strain RCC307), this protein is Elongation factor Ts.